Here is a 153-residue protein sequence, read N- to C-terminus: Arachidonate 5-lipoxygenase-activating protein (153 aa).

The Lumenal segment spans residues 1–8 (MDQETVGN). Residues 9-30 (VVLLAIVTLISVIQNGFFAHKV) form a helical membrane-spanning segment. Residues 31 to 52 (EHESKTQNGRSFQRTGTLAFER) are Cytoplasmic-facing. The chain crosses the membrane as a helical span at residues 53 to 77 (VYTANQNCVDAYPTFLVMLWSAGLL). Residues 78–80 (CSQ) are Lumenal-facing. A helical membrane pass occupies residues 81 to 102 (VPAAFAGLMYLFVRQKYFVGYL). Topologically, residues 103–107 (GERRQ) are cytoplasmic. The stretch at 108 to 115 (STPGYIFG) is an intramembrane region. Residues 116-128 (KRIILFLFLMSLA) form a helical membrane-spanning segment. At 129–153 (GIFNYYLILFFGSDFENYIKTITTT) the chain is on the lumenal side.

This sequence belongs to the MAPEG family. As to quaternary structure, homotrimer. Interacts with LTC4S and ALOX5.

The protein resides in the nucleus membrane. Its subcellular location is the endoplasmic reticulum membrane. Functionally, required for leukotriene biosynthesis by ALOX5 (5-lipoxygenase). Anchors ALOX5 to the membrane. Binds arachidonic acid, and could play an essential role in the transfer of arachidonic acid to ALOX5. Binds to MK-886, a compound that blocks the biosynthesis of leukotrienes. The protein is Arachidonate 5-lipoxygenase-activating protein (ALOX5AP) of Equus caballus (Horse).